A 99-amino-acid polypeptide reads, in one-letter code: Small ribosomal subunit protein bS6 (99 aa).

It belongs to the bacterial ribosomal protein bS6 family.

In terms of biological role, binds together with bS18 to 16S ribosomal RNA. In Lactiplantibacillus plantarum (strain ATCC BAA-793 / NCIMB 8826 / WCFS1) (Lactobacillus plantarum), this protein is Small ribosomal subunit protein bS6.